Here is a 491-residue protein sequence, read N- to C-terminus: Glutamyl-tRNA(Gln) amidotransferase subunit A (491 aa).

Serine 158 functions as the Charge relay system in the catalytic mechanism. Serine 182 acts as the Acyl-ester intermediate in catalysis.

This sequence belongs to the amidase family. GatA subfamily. In terms of assembly, heterotrimer of A, B and C subunits.

The enzyme catalyses L-glutamyl-tRNA(Gln) + L-glutamine + ATP + H2O = L-glutaminyl-tRNA(Gln) + L-glutamate + ADP + phosphate + H(+). Allows the formation of correctly charged Gln-tRNA(Gln) through the transamidation of misacylated Glu-tRNA(Gln) in organisms which lack glutaminyl-tRNA synthetase. The reaction takes place in the presence of glutamine and ATP through an activated gamma-phospho-Glu-tRNA(Gln). This is Glutamyl-tRNA(Gln) amidotransferase subunit A from Bradyrhizobium diazoefficiens (strain JCM 10833 / BCRC 13528 / IAM 13628 / NBRC 14792 / USDA 110).